The primary structure comprises 222 residues: MSETAPAETTAPAPVEKSPAKKKTKKAGAAKRKATGPPVSELITKAVSASKERGGVSLPALKKALAAGGYDVEKNNSRIKLGLKSLVSKGTLVQTKGTGASGSFKLNKKVASGEAKPKAKKTGAAKAKKPTGATPKKPKKTAGAKKTVKKTPKKAKKPAAAGVKKVTKSPKKAKAAAKPKKATKSPARPKAVKSKASKPKVTKPKAAKPKAAKVKKAVSKKK.

Over residues 1–16 (MSETAPAETTAPAPVE) the composition is skewed to low complexity. A disordered region spans residues 1–55 (MSETAPAETTAPAPVEKSPAKKKTKKAGAAKRKATGPPVSELITKAVSASKERGG). An N-acetylserine modification is found at Ser-2. Ser-2 is modified (phosphoserine). An N6-acetyllysine modification is found at Lys-17. Phosphoserine is present on Ser-18. A compositionally biased stretch (basic residues) spans 20 to 34 (AKKKTKKAGAAKRKA). Lys-26 carries the N6-methyllysine modification. Lys-33 bears the N6-(beta-hydroxybutyryl)lysine; alternate mark. Lys-33 is subject to N6-succinyllysine; alternate. Phosphothreonine is present on Thr-35. The H15 domain maps to 35–108 (TGPPVSELIT…GASGSFKLNK (74 aa)). An N6-acetyllysine modification is found at Lys-45. Lys-51 is modified (N6-(beta-hydroxybutyryl)lysine). Arg-53 is subject to Citrulline. N6-(beta-hydroxybutyryl)lysine is present on Lys-63. The residue at position 74 (Lys-74) is an N6-acetyllysine. N6-(beta-hydroxybutyryl)lysine is present on residues Lys-84, Lys-89, and Lys-105. The segment at 94-222 (QTKGTGASGS…KVKKAVSKKK (129 aa)) is disordered. Positions 118-129 (KAKKTGAAKAKK) are enriched in basic residues. A phosphothreonine mark is found at Thr-134 and Thr-151. Residues 136 to 157 (KKPKKTAGAKKTVKKTPKKAKK) are compositionally biased toward basic residues. N6-acetyllysine is present on Lys-164. Residues 165–183 (KVTKSPKKAKAAAKPKKAT) show a composition bias toward basic residues. Phosphoserine is present on residues Ser-169 and Ser-185. Over residues 190–222 (KAVKSKASKPKVTKPKAAKPKAAKVKKAVSKKK) the composition is skewed to basic residues.

Belongs to the histone H1/H5 family. Interacts with MSX1. Post-translationally, H1 histones are progressively phosphorylated during the cell cycle, becoming maximally phosphorylated during late G2 phase and M phase, and being dephosphorylated sharply thereafter. Citrullination at Arg-53 (H1R54ci) by PADI4 takes place within the DNA-binding site of H1 and results in its displacement from chromatin and global chromatin decondensation, thereby promoting pluripotency and stem cell maintenance.

The protein localises to the nucleus. The protein resides in the chromosome. Histone H1 protein binds to linker DNA between nucleosomes forming the macromolecular structure known as the chromatin fiber. Histones H1 are necessary for the condensation of nucleosome chains into higher-order structured fibers. Also acts as a regulator of individual gene transcription through chromatin remodeling, nucleosome spacing and DNA methylation. The sequence is that of Histone H1.5 (H1-5) from Rattus norvegicus (Rat).